Reading from the N-terminus, the 91-residue chain is Probable Fe(2+)-trafficking protein (91 aa).

It belongs to the Fe(2+)-trafficking protein family.

Could be a mediator in iron transactions between iron acquisition and iron-requiring processes, such as synthesis and/or repair of Fe-S clusters in biosynthetic enzymes. This chain is Probable Fe(2+)-trafficking protein, found in Thiobacillus denitrificans (strain ATCC 25259 / T1).